The following is a 438-amino-acid chain: Xylose isomerase (438 aa).

Residues H103 and D106 contribute to the active site. The Mg(2+) site is built by E234, E270, H273, D298, D309, D311, and D341.

Belongs to the xylose isomerase family. In terms of assembly, homotetramer. It depends on Mg(2+) as a cofactor.

It is found in the cytoplasm. It catalyses the reaction alpha-D-xylose = alpha-D-xylulofuranose. The polypeptide is Xylose isomerase (Phocaeicola vulgatus (strain ATCC 8482 / DSM 1447 / JCM 5826 / CCUG 4940 / NBRC 14291 / NCTC 11154) (Bacteroides vulgatus)).